The sequence spans 401 residues: Probable tRNA sulfurtransferase (401 aa).

The THUMP domain occupies 60 to 165 (EPIIEKLKTV…QDGTYVTCRD (106 aa)). Residues 183-184 (ML), 208-209 (HF), arginine 265, glycine 287, and glutamine 296 contribute to the ATP site.

It belongs to the ThiI family.

The protein resides in the cytoplasm. The enzyme catalyses [ThiI sulfur-carrier protein]-S-sulfanyl-L-cysteine + a uridine in tRNA + 2 reduced [2Fe-2S]-[ferredoxin] + ATP + H(+) = [ThiI sulfur-carrier protein]-L-cysteine + a 4-thiouridine in tRNA + 2 oxidized [2Fe-2S]-[ferredoxin] + AMP + diphosphate. The catalysed reaction is [ThiS sulfur-carrier protein]-C-terminal Gly-Gly-AMP + S-sulfanyl-L-cysteinyl-[cysteine desulfurase] + AH2 = [ThiS sulfur-carrier protein]-C-terminal-Gly-aminoethanethioate + L-cysteinyl-[cysteine desulfurase] + A + AMP + 2 H(+). The protein operates within cofactor biosynthesis; thiamine diphosphate biosynthesis. Catalyzes the ATP-dependent transfer of a sulfur to tRNA to produce 4-thiouridine in position 8 of tRNAs, which functions as a near-UV photosensor. Also catalyzes the transfer of sulfur to the sulfur carrier protein ThiS, forming ThiS-thiocarboxylate. This is a step in the synthesis of thiazole, in the thiamine biosynthesis pathway. The sulfur is donated as persulfide by IscS. This Geobacillus kaustophilus (strain HTA426) protein is Probable tRNA sulfurtransferase.